We begin with the raw amino-acid sequence, 453 residues long: Bifunctional protein GlmU (453 aa).

The pyrophosphorylase stretch occupies residues 1–226 (MLDILILAAG…IQEVEGINNR (226 aa)). UDP-N-acetyl-alpha-D-glucosamine is bound by residues 7–10 (LAAG), Lys-21, Gln-72, 77–78 (GT), 99–101 (YGD), Gly-136, Glu-151, Asn-166, and Asn-224. Asp-101 is a binding site for Mg(2+). Asn-224 lines the Mg(2+) pocket. The linker stretch occupies residues 227 to 247 (QQQATLERYYQQQQARALMDA). Residues 248 to 453 (GVTLLDPARF…QGWERPTRKS (206 aa)) are N-acetyltransferase. The UDP-N-acetyl-alpha-D-glucosamine site is built by Arg-330 and Lys-348. The active-site Proton acceptor is His-360. Positions 363 and 374 each coordinate UDP-N-acetyl-alpha-D-glucosamine. Residues Ala-377, 383–384 (NY), Ser-402, Ala-420, and Arg-437 each bind acetyl-CoA.

In the N-terminal section; belongs to the N-acetylglucosamine-1-phosphate uridyltransferase family. The protein in the C-terminal section; belongs to the transferase hexapeptide repeat family. Homotrimer. Mg(2+) serves as cofactor.

The protein resides in the cytoplasm. The enzyme catalyses alpha-D-glucosamine 1-phosphate + acetyl-CoA = N-acetyl-alpha-D-glucosamine 1-phosphate + CoA + H(+). It carries out the reaction N-acetyl-alpha-D-glucosamine 1-phosphate + UTP + H(+) = UDP-N-acetyl-alpha-D-glucosamine + diphosphate. It functions in the pathway nucleotide-sugar biosynthesis; UDP-N-acetyl-alpha-D-glucosamine biosynthesis; N-acetyl-alpha-D-glucosamine 1-phosphate from alpha-D-glucosamine 6-phosphate (route II): step 2/2. Its pathway is nucleotide-sugar biosynthesis; UDP-N-acetyl-alpha-D-glucosamine biosynthesis; UDP-N-acetyl-alpha-D-glucosamine from N-acetyl-alpha-D-glucosamine 1-phosphate: step 1/1. It participates in bacterial outer membrane biogenesis; LPS lipid A biosynthesis. Catalyzes the last two sequential reactions in the de novo biosynthetic pathway for UDP-N-acetylglucosamine (UDP-GlcNAc). The C-terminal domain catalyzes the transfer of acetyl group from acetyl coenzyme A to glucosamine-1-phosphate (GlcN-1-P) to produce N-acetylglucosamine-1-phosphate (GlcNAc-1-P), which is converted into UDP-GlcNAc by the transfer of uridine 5-monophosphate (from uridine 5-triphosphate), a reaction catalyzed by the N-terminal domain. In Cellvibrio japonicus (strain Ueda107) (Pseudomonas fluorescens subsp. cellulosa), this protein is Bifunctional protein GlmU.